A 200-amino-acid chain; its full sequence is Pyridoxal 5'-phosphate synthase subunit PdxT (200 aa).

Gly52–Ser54 serves as a coordination point for L-glutamine. The active-site Nucleophile is the Cys84. L-glutamine-binding positions include Arg116 and Ile145 to Arg146. Residues His181 and Glu183 each act as charge relay system in the active site.

It belongs to the glutaminase PdxT/SNO family. In the presence of PdxS, forms a dodecamer of heterodimers. Only shows activity in the heterodimer.

The enzyme catalyses aldehydo-D-ribose 5-phosphate + D-glyceraldehyde 3-phosphate + L-glutamine = pyridoxal 5'-phosphate + L-glutamate + phosphate + 3 H2O + H(+). The catalysed reaction is L-glutamine + H2O = L-glutamate + NH4(+). It participates in cofactor biosynthesis; pyridoxal 5'-phosphate biosynthesis. Functionally, catalyzes the hydrolysis of glutamine to glutamate and ammonia as part of the biosynthesis of pyridoxal 5'-phosphate. The resulting ammonia molecule is channeled to the active site of PdxS. In Sulfurisphaera tokodaii (strain DSM 16993 / JCM 10545 / NBRC 100140 / 7) (Sulfolobus tokodaii), this protein is Pyridoxal 5'-phosphate synthase subunit PdxT.